A 539-amino-acid polypeptide reads, in one-letter code: Cell division control protein 6 homolog (539 aa).

Residues methionine 1–isoleucine 40 are disordered. The Nuclear localization signal signature appears at arginine 35 to lysine 38.

This sequence belongs to the CDC6/cdc18 family. Highly expressed in roots, flower buds and etiolated seedlings. Expressed in leaves and stems. Highly expressed in proliferating cells such as root meristems, leaf primordia and young growing leaves, as well as cells undergoing endoreduplication cycles.

Its subcellular location is the nucleus. In terms of biological role, may be involved in the initiation of DNA replication. May play a role in endoreduplication. Could act as one of the factors that contributes to maintain endoreduplication competence. The sequence is that of Cell division control protein 6 homolog from Arabidopsis thaliana (Mouse-ear cress).